A 113-amino-acid polypeptide reads, in one-letter code: Probable leucocin-A immunity protein (113 aa).

This sequence belongs to the immunity protein EntA family.

In terms of biological role, imparts immunity to leucocin-A to naturally sensitive host strains. The chain is Probable leucocin-A immunity protein from Leuconostoc gelidum.